The sequence spans 183 residues: Neuronal synaptobrevin (183 aa).

A compositionally biased stretch (low complexity) spans 1-17 (MADAAPAGDAPPNAGAP). The segment at 1-32 (MADAAPAGDAPPNAGAPAGEGGDGEIVGGPHN) is disordered. Topologically, residues 1-106 (MADAAPAGDA…KFWLQNLKMM (106 aa)) are cytoplasmic. The segment covering 18–27 (AGEGGDGEIV) has biased composition (gly residues). The v-SNARE coiled-coil homology domain occupies 41–101 (RLQQTQAQVD…GKLKRKFWLQ (61 aa)). The chain crosses the membrane as a helical span at residues 107–127 (IIMGVIGLVVVGIIANKLGLI). The Vesicular portion of the chain corresponds to 128–183 (GGEQPPQYQYPPQYMQPPPPPPQQPAGGQSSLVDAAGAGDGAGAGGSAGAGDHGGV). A disordered region spans residues 135–183 (YQYPPQYMQPPPPPPQQPAGGQSSLVDAAGAGDGAGAGGSAGAGDHGGV). The segment covering 141-151 (YMQPPPPPPQQ) has biased composition (pro residues). The segment covering 165–183 (AGDGAGAGGSAGAGDHGGV) has biased composition (gly residues).

It belongs to the synaptobrevin family. In terms of assembly, part of the SNARE core complex containing Snap25 and syntaxin. Specifically expressed in neurons and synapses.

Its subcellular location is the cytoplasmic vesicle. The protein localises to the secretory vesicle. The protein resides in the synaptic vesicle membrane. It localises to the early endosome membrane. Its function is as follows. Involved in the targeting and/or fusion of transport vesicles to their target membrane. Major SNARE protein of synaptic vesicles which mediates fusion of synaptic vesicles to release neurotransmitters. Essential for fast vesicular exocytosis and activity-dependent neurotransmitter release as well as fast endocytosis that mediates rapid reuse of synaptic vesicles. Also involved in a neuron-specific sort-and-degrade mechanism that promotes endolysosomal degradation and is required for neuronal maintenance. The chain is Neuronal synaptobrevin from Drosophila melanogaster (Fruit fly).